We begin with the raw amino-acid sequence, 962 residues long: Splicing regulator ARVCF (962 aa).

Residues 8 to 46 (SAASILASVKEQEARFERLTRALEQERRHVALQLERAQQ) are a coiled coil. Residues 95–122 (TVEEDPGTPTSHVSIVTSEDGTTRRTET) are disordered. T102 and T104 each carry phosphothreonine. Positions 102-114 (TPTSHVSIVTSED) are enriched in polar residues. R170 bears the Omega-N-methylarginine mark. Disordered regions lie at residues 186 to 253 (GGGF…LPER) and 266 to 290 (RSLA…RRRP). Over residues 206 to 217 (RGLGMRPPRAGP) the composition is skewed to low complexity. A Phosphoserine modification is found at S267. Acidic residues predominate over residues 270–280 (ADDEGGPELEP). Phosphoserine is present on residues S332, S335, S343, and S345. ARM repeat units follow at residues 348-387 (SARK…HLCF), 390-429 (EGVK…NLSY), 433-467 (TDNK…VTGT), 468-508 (LWNL…NEDS), 526-565 (LRNV…DTDN), and 575-622 (MRNL…GKKA). The disordered stretch occupies residues 590 to 614 (DRYQEAEPGPLGSAVGSQRRRRDDA). S606 is modified (phosphoserine). Positions 607 to 623 (QRRRRDDASCFGGKKAK) match the Nuclear localization signal motif. T642 bears the Phosphothreonine mark. ARM repeat units follow at residues 646 to 686 (PKRT…AAGA), 699 to 738 (TYIR…NLSL), 739 to 781 (DRRN…AVLN), and 782 to 826 (TIHE…SHVL). The interval 776–962 (VVAVLNTIHE…AKPQPVDSWV (187 aa)) is required for interaction with RNA-binding proteins DDX5, HNRNPH2 and SRSF1 and with mRNAs. The interval 854–962 (ATAKGPKGAL…AKPQPVDSWV (109 aa)) is disordered. S864 and S871 each carry phosphoserine. Position 872 is a phosphothreonine (T872). The span at 878-887 (KSLEGEKTGS) shows a compositional bias: basic and acidic residues. S915 bears the Phosphoserine mark. Basic and acidic residues predominate over residues 920 to 932 (ASEKEPLKLDPSR).

This sequence belongs to the beta-catenin family. Component of a ribonucleoprotein complex containing mRNAs and RNA-binding proteins including DDX5, HNRNPH2 and SRSF1 as well as ARVCF. Interacts (via the extreme C-terminus) with FRMPD2 (via the PDZ 2 domain). Interacts with CCDC85B. In terms of tissue distribution, found in all the examined tissues including heart, brain, liver and kidney. Found at low level in lung. Expressed in dermal connective tissue, salivary gland duct and in the corneal layer (at protein level). Expressed in arrector pili muscle (at protein level). High levels detected in epithelial cells with lower levels found in fibroblasts and T lymphocytes.

It localises to the cell junction. It is found in the adherens junction. The protein resides in the nucleus. The protein localises to the cytoplasm. In terms of biological role, contributes to the regulation of alternative splicing of pre-mRNAs. In Homo sapiens (Human), this protein is Splicing regulator ARVCF.